A 134-amino-acid polypeptide reads, in one-letter code: Small ribosomal subunit protein uS11 (134 aa).

It belongs to the universal ribosomal protein uS11 family. As to quaternary structure, part of the 30S ribosomal subunit. Interacts with proteins S7 and S18. Binds to IF-3.

Functionally, located on the platform of the 30S subunit, it bridges several disparate RNA helices of the 16S rRNA. Forms part of the Shine-Dalgarno cleft in the 70S ribosome. The polypeptide is Small ribosomal subunit protein uS11 (Frankia alni (strain DSM 45986 / CECT 9034 / ACN14a)).